The primary structure comprises 159 residues: MSLIRRGNAFDPFSLDLWDPVDGFPFGSGGSSSSSGSLFPRANSDAAAFAGARIDWKETPEVHVFKADVPGLKKEEVKVEVDDGNILQISGERSREQEEKSDKWHRVERSSGKFLRRFRLPENTKPEQIKASMENGVLTVTVPKEEPKKPDVKSIQISG.

Residues 45–159 enclose the sHSP domain; sequence DAAAFAGARI…PDVKSIQISG (115 aa).

Belongs to the small heat shock protein (HSP20) family. May form oligomeric structures.

Its subcellular location is the cytoplasm. This chain is 17.7 kDa class I heat shock protein (HSP17.7), found in Oryza sativa subsp. japonica (Rice).